A 21-amino-acid chain; its full sequence is Cold shock protein CspSt (21 aa).

The region spanning 1–21 is the CSD domain; it reads KNGTVKWFNAEKGFGFITSED.

Its subcellular location is the cytoplasm. The sequence is that of Cold shock protein CspSt from Streptococcus thermophilus.